The chain runs to 360 residues: SVP1-like protein 2 (360 aa).

WD repeat units lie at residues 12-50 (AHEP…LRMK), 191-231 (AHKS…LRFE), and 236-275 (LDRA…PQPE).

This sequence belongs to the WD repeat PROPPIN family.

The protein localises to the vacuole membrane. It is found in the cytoplasmic vesicle membrane. Functionally, involved in mitochondrial or peroxisomal functions and amino acid signaling pathways. The polypeptide is SVP1-like protein 2 (HSV2) (Pichia angusta (Yeast)).